Here is a 313-residue protein sequence, read N- to C-terminus: UDP-N-acetylenolpyruvoylglucosamine reductase (313 aa).

An FAD-binding PCMH-type domain is found at 31–207 (VGGPADALVA…TGVDLGLGFD (177 aa)). The active site involves R180. Catalysis depends on C236, which acts as the Proton donor. E307 is an active-site residue.

This sequence belongs to the MurB family. The cofactor is FAD.

It is found in the cytoplasm. The catalysed reaction is UDP-N-acetyl-alpha-D-muramate + NADP(+) = UDP-N-acetyl-3-O-(1-carboxyvinyl)-alpha-D-glucosamine + NADPH + H(+). It participates in cell wall biogenesis; peptidoglycan biosynthesis. In terms of biological role, cell wall formation. The protein is UDP-N-acetylenolpyruvoylglucosamine reductase of Desulfosudis oleivorans (strain DSM 6200 / JCM 39069 / Hxd3) (Desulfococcus oleovorans).